The sequence spans 749 residues: Probable galactinol--sucrose galactosyltransferase 6 (749 aa).

It belongs to the glycosyl hydrolases 36 family.

The enzyme catalyses alpha-D-galactosyl-(1-&gt;3)-1D-myo-inositol + sucrose = raffinose + myo-inositol. Functionally, transglycosidase operating by a ping-pong reaction mechanism. Involved in the synthesis of raffinose, a major soluble carbohydrate in seeds, roots and tubers. The chain is Probable galactinol--sucrose galactosyltransferase 6 (RFS6) from Arabidopsis thaliana (Mouse-ear cress).